A 108-amino-acid chain; its full sequence is Phosphoribosyl-AMP cyclohydrolase (108 aa).

Aspartate 78 is a Mg(2+) binding site. Cysteine 79 contributes to the Zn(2+) binding site. Mg(2+) is bound by residues aspartate 80 and aspartate 82. Zn(2+) contacts are provided by cysteine 95 and cysteine 102.

The protein belongs to the PRA-CH family. As to quaternary structure, homodimer. The cofactor is Mg(2+). Zn(2+) is required as a cofactor.

The protein resides in the cytoplasm. The enzyme catalyses 1-(5-phospho-beta-D-ribosyl)-5'-AMP + H2O = 1-(5-phospho-beta-D-ribosyl)-5-[(5-phospho-beta-D-ribosylamino)methylideneamino]imidazole-4-carboxamide. It functions in the pathway amino-acid biosynthesis; L-histidine biosynthesis; L-histidine from 5-phospho-alpha-D-ribose 1-diphosphate: step 3/9. In terms of biological role, catalyzes the hydrolysis of the adenine ring of phosphoribosyl-AMP. This chain is Phosphoribosyl-AMP cyclohydrolase, found in Cenarchaeum symbiosum (strain A).